The primary structure comprises 81 residues: Small cysteine-rich protein 6 (81 aa).

The signal sequence occupies residues 1-23; the sequence is MDTKVACLLLIILGALTVQGAVS. Positions 24–25 are excised as a propeptide; sequence GN.

It belongs to the Cnidaria small cysteine-rich protein (SCRiP) family. beta subfamily. Post-translationally, contains 4 disulfide bonds.

Its subcellular location is the secreted. The protein localises to the nematocyst. Its function is as follows. Induces neurotoxic symptoms on zebrafish. Has also been claimed to be implied in calcification, but tests on homolog proteins suggest that proteins of this family have a neurotoxic function and not a calcification function. The polypeptide is Small cysteine-rich protein 6 (Orbicella faveolata (Mountainous star coral)).